A 217-amino-acid polypeptide reads, in one-letter code: Large ribosomal subunit protein uL4 (217 aa).

The segment at Lys-46–Thr-103 is disordered.

The protein belongs to the universal ribosomal protein uL4 family. In terms of assembly, part of the 50S ribosomal subunit.

Its function is as follows. One of the primary rRNA binding proteins, this protein initially binds near the 5'-end of the 23S rRNA. It is important during the early stages of 50S assembly. It makes multiple contacts with different domains of the 23S rRNA in the assembled 50S subunit and ribosome. In terms of biological role, forms part of the polypeptide exit tunnel. The sequence is that of Large ribosomal subunit protein uL4 from Corynebacterium jeikeium (strain K411).